The primary structure comprises 89 residues: Small ribosomal subunit protein uS15 (89 aa).

Belongs to the universal ribosomal protein uS15 family. As to quaternary structure, part of the 30S ribosomal subunit. Forms a bridge to the 50S subunit in the 70S ribosome, contacting the 23S rRNA.

One of the primary rRNA binding proteins, it binds directly to 16S rRNA where it helps nucleate assembly of the platform of the 30S subunit by binding and bridging several RNA helices of the 16S rRNA. Functionally, forms an intersubunit bridge (bridge B4) with the 23S rRNA of the 50S subunit in the ribosome. The polypeptide is Small ribosomal subunit protein uS15 (Edwardsiella ictaluri (strain 93-146)).